A 159-amino-acid polypeptide reads, in one-letter code: Transcription elongation factor GreA (159 aa).

Residues 47–73 adopt a coiled-coil conformation; the sequence is AEYDAAREEQSLTEAHIADLENKLSTA.

This sequence belongs to the GreA/GreB family.

Functionally, necessary for efficient RNA polymerase transcription elongation past template-encoded arresting sites. The arresting sites in DNA have the property of trapping a certain fraction of elongating RNA polymerases that pass through, resulting in locked ternary complexes. Cleavage of the nascent transcript by cleavage factors such as GreA or GreB allows the resumption of elongation from the new 3'terminus. GreA releases sequences of 2 to 3 nucleotides. In Chlorobium phaeobacteroides (strain DSM 266 / SMG 266 / 2430), this protein is Transcription elongation factor GreA.